We begin with the raw amino-acid sequence, 392 residues long: Rhizopuspepsin-5 (392 aa).

The first 21 residues, 1–21 (MKFSLISSCVALAVLVLSTEA), serve as a signal peptide directing secretion. Residues 22 to 69 (APNGKKVNIPLTKNKDYKPNAKNAIQKVLAKYHRHRSTSSSSNSTSTD) constitute a propeptide, activation peptide. The region spanning 85 to 389 (YFGQVKVGTP…NPTVPQVQIA (305 aa)) is the Peptidase A1 domain. Asp-103 is a catalytic residue. Cys-116 and Cys-119 are oxidised to a cystine. Residue Asp-286 is part of the active site. A disulfide bridge links Cys-320 with Cys-353.

This sequence belongs to the peptidase A1 family.

It carries out the reaction Hydrolysis of proteins with broad specificity similar to that of pepsin A, preferring hydrophobic residues at P1 and P1'. Clots milk and activates trypsinogen. Does not cleave 4-Gln-|-His-5, but does cleave 10-His-|-Leu-11 and 12-Val-|-Glu-13 in B chain of insulin.. The polypeptide is Rhizopuspepsin-5 (Rhizopus niveus).